Reading from the N-terminus, the 214-residue chain is Large ribosomal subunit protein uL6m (214 aa).

The N-terminal 16 residues, 1 to 16 (MSFIQRRLLSQTLFLR), are a transit peptide targeting the mitochondrion.

Belongs to the universal ribosomal protein uL6 family. In terms of assembly, component of the mitochondrial large ribosomal subunit (mt-LSU). Mature yeast 74S mitochondrial ribosomes consist of a small (37S) and a large (54S) subunit. The 37S small subunit contains a 15S ribosomal RNA (15S mt-rRNA) and 34 different proteins. The 54S large subunit contains a 21S rRNA (21S mt-rRNA) and 46 different proteins.

The protein localises to the mitochondrion. In terms of biological role, component of the mitochondrial ribosome (mitoribosome), a dedicated translation machinery responsible for the synthesis of mitochondrial genome-encoded proteins, including at least some of the essential transmembrane subunits of the mitochondrial respiratory chain. The mitoribosomes are attached to the mitochondrial inner membrane and translation products are cotranslationally integrated into the membrane. The sequence is that of Large ribosomal subunit protein uL6m (MRPL6) from Saccharomyces cerevisiae (strain ATCC 204508 / S288c) (Baker's yeast).